The following is a 223-amino-acid chain: Coiled-coil domain-containing protein 124 (223 aa).

The tract at residues 1–126 (MPKKFQGENT…AEKAKSHLEV (126 aa)) is disordered. Residues 15 to 82 (ARARRAEAKA…LLEEEDSKLK (68 aa)) are a coiled coil. 2 stretches are compositionally biased toward basic and acidic residues: residues 18–74 (RRAE…QRLL) and 99–126 (QIED…HLEV). Serine 141 and serine 194 each carry phosphoserine. The interval 204-223 (WLRSPDNPMNQRAVPFNAPK) is disordered.

Belongs to the CCDC124 family. In terms of assembly, associates with translationally inactive ribosomes in the nonrotated state. Interacts with RASGEF1B. Ubiquitously expressed.

The protein resides in the cytoplasm. It localises to the cytoskeleton. The protein localises to the microtubule organizing center. It is found in the centrosome. Its subcellular location is the midbody. In terms of biological role, ribosome-binding protein involved in ribosome hibernation: associates with translationally inactive ribosomes and stabilizes the nonrotated conformation of the 80S ribosome, thereby promoting ribosome preservation and storage. Also required for proper progression of late cytokinetic stages. The chain is Coiled-coil domain-containing protein 124 from Homo sapiens (Human).